Reading from the N-terminus, the 414-residue chain is Enolase (414 aa).

Q162 provides a ligand contact to (2R)-2-phosphoglycerate. E204 acts as the Proton donor in catalysis. Mg(2+) is bound by residues D239, E280, and D307. Residues K332, R361, S362, and K383 each coordinate (2R)-2-phosphoglycerate. K332 acts as the Proton acceptor in catalysis.

The protein belongs to the enolase family. It depends on Mg(2+) as a cofactor.

The protein localises to the cytoplasm. The protein resides in the secreted. It is found in the cell surface. The catalysed reaction is (2R)-2-phosphoglycerate = phosphoenolpyruvate + H2O. It functions in the pathway carbohydrate degradation; glycolysis; pyruvate from D-glyceraldehyde 3-phosphate: step 4/5. Functionally, catalyzes the reversible conversion of 2-phosphoglycerate (2-PG) into phosphoenolpyruvate (PEP). It is essential for the degradation of carbohydrates via glycolysis. This is Enolase from Campylobacter jejuni (strain RM1221).